Reading from the N-terminus, the 159-residue chain is Developmental pluripotency-associated protein 3 (159 aa).

Disordered regions lie at residues 1–31 (MDPS…GASQ) and 140–159 (GWDP…PLQP). Positions 149-159 (IGNQDTKPLQP) are enriched in polar residues.

In terms of tissue distribution, low expression in testis, ovary and thymus. Expressed in embryonic stem and carcinoma cells. Highly expressed in testicular germ cell tumors.

The protein resides in the nucleus. Its subcellular location is the cytoplasm. Functionally, primordial germ cell (PGCs)-specific protein involved in epigenetic chromatin reprogramming in the zygote following fertilization. In zygotes, DNA demethylation occurs selectively in the paternal pronucleus before the first cell division, while the adjacent maternal pronucleus and certain paternally-imprinted loci are protected from this process. Participates in protection of DNA methylation in the maternal pronucleus by preventing conversion of 5mC to 5hmC: specifically recognizes and binds histone H3 dimethylated at 'Lys-9' (H3K9me2) on maternal genome, and protects maternal genome from TET3-mediated conversion to 5hmC and subsequent DNA demethylation. Does not bind paternal chromatin, which is mainly packed into protamine and does not contain much H3K9me2 mark. Also protects imprinted loci that are marked with H3K9me2 in mature sperm from DNA demethylation in early embryogenesis. May be important for the totipotent/pluripotent states continuing through preimplantation development. Also involved in chromatin condensation in oocytogenesis. The sequence is that of Developmental pluripotency-associated protein 3 (DPPA3) from Homo sapiens (Human).